A 218-amino-acid chain; its full sequence is Variable small protein 8 (218 aa).

An N-terminal signal peptide occupies residues 1 to 18 (MRKRISAIIMTLFMVFMS). The N-palmitoyl cysteine moiety is linked to residue C19. The S-diacylglycerol cysteine moiety is linked to residue C19.

This sequence belongs to the variable small protein (Vsp) family.

It localises to the cell outer membrane. The Vlp and Vsp proteins are antigenically distinct proteins, only one vlp or vsp gene is transcriptionally active at any one time. Switching between these genes is a mechanism of host immune response evasion. This is Variable small protein 8 from Borrelia hermsii.